Here is a 612-residue protein sequence, read N- to C-terminus: MKWYLWGAVVLLYSLFGSACSTEWRYDLSAYGLSPVENVDNAPAMARALEQIREKCEENQTIVVTLPKGRYEFYPDSAAERVYFISNHDQMNPKKVGLPFEGMKNMVFDGQGSELIFHGRMLPVSLLDSRNCVLKNFSIDFKHPQISQVKVVENDTVNGGITFEVAPWVHYEIRDSVFVAKGEGWELTPGSGIAFEGDTRHLVYNTSDIPVGVRGLIEVSPRLIKSPRWKDNRLVPGTVIAMRSWERPAPGVFLYHDVNTTLENIKVHYAEGMGLLAQMSENITLDGFSVCLKGADDPRYFTTQADATHFSACKGAIISKNGLYEGMMDDAINVHGTYLKVVRRVNDSTLVGRYMHPQSYGFEWGRVGDSVQFIHSSTMELIGARNRITAIKAVDQPDYRGAKEFEIRFENTVNPSIHEGSGFGIENLEWTPTVLFSDNLIRNNRARGSLFSTPRQTVVENNVFDHTSGTAILLCGDCNGWFETGACRNVLIRKNKFINSLTNMFQFTNAIISIYPEIPDLASQRKYFHSDIVIDANEFITFDRPLVYAKSVDGLVFTNNIVKQNKEYPAFHWNNYRFYFQRVIHSKIENNYFDEGFIRERDVLEENNGYDI.

An N-terminal signal peptide occupies residues 1-19 (MKWYLWGAVVLLYSLFGSA). Cysteine 20 is lipidated: N-palmitoyl cysteine. A lipid anchor (S-diacylglycerol cysteine) is attached at cysteine 20. 3 PbH1 repeats span residues 431 to 453 (TPTV…LFST), 454 to 476 (PRQT…LLCG), and 487 to 536 (CRNV…VIDA).

This sequence belongs to the glycosyl hydrolase 110 family. B subfamily.

It localises to the cell membrane. The enzyme catalyses Hydrolysis of terminal, non-reducing branched (1-&gt;3)-alpha-D-galactosidic residues, producing free D-galactose.. It catalyses the reaction Hydrolysis of terminal, non-reducing linear (1-&gt;3)-alpha-D-galactosidic residues, producing free D-galactose.. The catalysed reaction is Hydrolysis of terminal, non-reducing alpha-D-galactose residues in alpha-D-galactosides, including galactose oligosaccharides, galactomannans and galactolipids.. Functionally, alpha-galactosidase. Removes both branched alpha-1,3-linked galactose residues of blood group B antigens and linear alpha-1,3-linked galactose structures. This chain is Alpha-1,3-galactosidase B (glaB), found in Parabacteroides distasonis (strain ATCC 8503 / DSM 20701 / CIP 104284 / JCM 5825 / NCTC 11152).